The sequence spans 107 residues: MHAKIILALFLGMTAFLAVQADHHHDHGHDDHEHEELTLEKIKEKIKDYADKTPVDQLTERVQAGRDYLLGKGARPSHLPARVDRHLSKLTAAEKQELADYLLTFLH.

The signal sequence occupies residues M1–A21.

In terms of tissue distribution, coelomic liquid (at protein level). Expressed in large fat cells in contact with coelomic cavities, in intestinal epithelia and at the epidermis level.

It localises to the secreted. Has bacteriostatic activity against M.luteus. No activity toward E.coli and F.oxysporum. This Theromyzon tessulatum (Duck leech) protein is Theromyzin.